Reading from the N-terminus, the 217-residue chain is MQFFADTAEIDDIKELAATGLLDGVTTNPSLIHKSGRDFIEVTKEICGITDGPVSAEVVALDHATMMKEADKLRAIADNVCIKVPLTIDGLKTCKALSDDGTMVNVTLCFSANQALLAAKAGATFVSPFVGRHDDNGFNGMELIRDIRTIYDNYAFETEILVASVRHTTHVLEAALIGADVMTAPPKVIMALANHVLTNKGIEGFLKDWEATGQSIL.

The active-site Schiff-base intermediate with substrate is the Lys83.

It belongs to the transaldolase family. Type 3B subfamily.

It localises to the cytoplasm. The catalysed reaction is D-sedoheptulose 7-phosphate + D-glyceraldehyde 3-phosphate = D-erythrose 4-phosphate + beta-D-fructose 6-phosphate. It participates in carbohydrate degradation; pentose phosphate pathway; D-glyceraldehyde 3-phosphate and beta-D-fructose 6-phosphate from D-ribose 5-phosphate and D-xylulose 5-phosphate (non-oxidative stage): step 2/3. Its function is as follows. Transaldolase is important for the balance of metabolites in the pentose-phosphate pathway. This Erythrobacter litoralis (strain HTCC2594) protein is Probable transaldolase.